Consider the following 441-residue polypeptide: Ribosomal protein uS12 methylthiotransferase RimO (441 aa).

One can recognise an MTTase N-terminal domain in the interval 8-118; it reads PKIGFVSLGC…VLEHVHHYVP (111 aa). The [4Fe-4S] cluster site is built by Cys-17, Cys-53, Cys-82, Cys-150, Cys-154, and Cys-157. Residues 136–373 form the Radical SAM core domain; the sequence is LTPRHYAYLK…MQLQQQISAE (238 aa). In terms of domain architecture, TRAM spans 376 to 441; it reads QEKVGREILV…DEYDLWGSRV (66 aa).

It belongs to the methylthiotransferase family. RimO subfamily. [4Fe-4S] cluster is required as a cofactor.

The protein resides in the cytoplasm. The catalysed reaction is L-aspartate(89)-[ribosomal protein uS12]-hydrogen + (sulfur carrier)-SH + AH2 + 2 S-adenosyl-L-methionine = 3-methylsulfanyl-L-aspartate(89)-[ribosomal protein uS12]-hydrogen + (sulfur carrier)-H + 5'-deoxyadenosine + L-methionine + A + S-adenosyl-L-homocysteine + 2 H(+). Catalyzes the methylthiolation of an aspartic acid residue of ribosomal protein uS12. In Escherichia coli (strain UTI89 / UPEC), this protein is Ribosomal protein uS12 methylthiotransferase RimO.